The chain runs to 200 residues: Large ribosomal subunit protein uL4 (200 aa).

The interval 38 to 72 (GRQGTKQQKTRSDVAGGGKRPWRQKGTGRARAGTT) is disordered.

This sequence belongs to the universal ribosomal protein uL4 family. Part of the 50S ribosomal subunit.

One of the primary rRNA binding proteins, this protein initially binds near the 5'-end of the 23S rRNA. It is important during the early stages of 50S assembly. It makes multiple contacts with different domains of the 23S rRNA in the assembled 50S subunit and ribosome. Its function is as follows. Forms part of the polypeptide exit tunnel. This Pseudomonas putida (strain ATCC 700007 / DSM 6899 / JCM 31910 / BCRC 17059 / LMG 24140 / F1) protein is Large ribosomal subunit protein uL4.